A 205-amino-acid chain; its full sequence is MSASTSSHRPIKGILKNKSSSGSSVATSGQQSGGNIQDVKRKKSQKWDESSILATHRATYRDYDLMKANEPGTSYMNLQDDGEDSVRDVEGEDSVRGVEGKEAMAATDASDHSCEVEEEESNEAYMRKLLLHKQEKKRQFEIRRRLHYNEELNIKLARQLMWNDLQSEDDENEERPQATNEEKTAAEESEEAPLSGGLQTQSCDP.

Disordered stretches follow at residues 1 to 51 (MSAS…DESS) and 70 to 114 (EPGT…DHSC). Positions 12-17 (KGILKN) are required for binding PPP1CC. Residues 19 to 34 (SSSGSSVATSGQQSGG) show a composition bias toward low complexity. A required for binding PPP1CC region spans residues 43–55 (KSQKWDESSILAT). Basic and acidic residues predominate over residues 84-102 (DSVRDVEGEDSVRGVEGKE). The segment at 147–150 (HYNE) is required for binding PPP1CC catalytic center, displacing metal ions and inhibition of PPP1CC catalytic activity. The segment at 165–205 (LQSEDDENEERPQATNEEKTAAEESEEAPLSGGLQTQSCDP) is disordered. The span at 174-186 (ERPQATNEEKTAA) shows a compositional bias: basic and acidic residues.

The protein belongs to the protein phosphatase inhibitor 2 family.

Its function is as follows. Functions as a protein phosphatase inhibitor. It inhibits activity of the catalytic subunit of PP1 and weakly inhibits the activity of myosin-associated phosphates. The sequence is that of Protein phosphatase inhibitor 2 family member C (PPP1R2C) from Macaca fascicularis (Crab-eating macaque).